The chain runs to 439 residues: Microfibrillar-associated protein 1 (439 aa).

Disordered regions lie at residues 1-27 and 39-200; these read MSVP…NEKG and YVSG…PRLK. N-acetylserine is present on serine 2. Serine 52 and serine 53 each carry phosphoserine. Over residues 61–70 the composition is skewed to basic and acidic residues; the sequence is QFIKKAKEQE. A Glycyl lysine isopeptide (Lys-Gly) (interchain with G-Cter in SUMO2) cross-link involves residue lysine 67. Residues 71-81 show a composition bias toward acidic residues; it reads AEPEEQEEDSS. 5 positions are modified to phosphoserine: serine 94, serine 116, serine 118, serine 132, and serine 133. Composition is skewed to acidic residues over residues 112–122 and 131–144; these read VVGESDSEVEG and DSSE…DDEE. Positions 145-163 are enriched in basic and acidic residues; the sequence is IERRRGMMRQRAQERKNEE. Residues 178–195 are compositionally biased toward acidic residues; the sequence is ESESESEYEEYTDSEDEM. A Glycyl lysine isopeptide (Lys-Gly) (interchain with G-Cter in SUMO2) cross-link involves residue lysine 249. Threonine 267 bears the Phosphothreonine mark. Lysine 357 is covalently cross-linked (Glycyl lysine isopeptide (Lys-Gly) (interchain with G-Cter in SUMO2)). Serine 361 carries the phosphoserine modification. Residues lysine 371, lysine 381, lysine 415, and lysine 418 each participate in a glycyl lysine isopeptide (Lys-Gly) (interchain with G-Cter in SUMO2) cross-link. Serine 432 is subject to Phosphoserine.

This sequence belongs to the MFAP1 family. As to quaternary structure, component of the spliceosome B complex. Interacts with PRPF38A (via N-terminal interaction domain).

The protein resides in the nucleus. Its function is as follows. Involved in pre-mRNA splicing as a component of the spliceosome. The chain is Microfibrillar-associated protein 1 from Homo sapiens (Human).